Here is a 434-residue protein sequence, read N- to C-terminus: Enolase (434 aa).

Q165 serves as a coordination point for (2R)-2-phosphoglycerate. The Proton donor role is filled by E207. Mg(2+)-binding residues include D244, E291, and D318. (2R)-2-phosphoglycerate is bound by residues K343, R372, S373, and K394. Catalysis depends on K343, which acts as the Proton acceptor.

Belongs to the enolase family. Mg(2+) serves as cofactor.

It localises to the cytoplasm. The protein resides in the secreted. It is found in the cell surface. The enzyme catalyses (2R)-2-phosphoglycerate = phosphoenolpyruvate + H2O. It participates in carbohydrate degradation; glycolysis; pyruvate from D-glyceraldehyde 3-phosphate: step 4/5. Functionally, catalyzes the reversible conversion of 2-phosphoglycerate (2-PG) into phosphoenolpyruvate (PEP). It is essential for the degradation of carbohydrates via glycolysis. This is Enolase from Staphylococcus epidermidis (strain ATCC 35984 / DSM 28319 / BCRC 17069 / CCUG 31568 / BM 3577 / RP62A).